The chain runs to 291 residues: Tetrahydromethanopterin:alpha-L-glutamate ligase (291 aa).

In terms of domain architecture, ATP-grasp spans 101-286; sequence SVFLELNNLP…IADKLLEKII (186 aa). ATP contacts are provided by residues K136, 175 to 187, and R203; that span reads QEFIKPVRNEHRD. The Mg(2+) site is built by D247, E259, and N261. The Mn(2+) site is built by D247, E259, and N261.

It belongs to the RimK family. MptN subfamily. In terms of assembly, homodimer. Mg(2+) is required as a cofactor. Requires Mn(2+) as cofactor.

The enzyme catalyses 5,6,7,8-tetrahydromethanopterin + L-glutamate + ATP = 5,6,7,8-tetrahydrosarcinapterin + ADP + phosphate + H(+). Its pathway is cofactor biosynthesis; 5,6,7,8-tetrahydrosarcinapterin biosynthesis. Its function is as follows. Catalyzes the ATP or GTP-dependent addition of one L-glutamate molecule to tetrahydromethanopterin, producing tetrahydrosarcinapterin. The protein is Tetrahydromethanopterin:alpha-L-glutamate ligase (mptN) of Methanocaldococcus jannaschii (strain ATCC 43067 / DSM 2661 / JAL-1 / JCM 10045 / NBRC 100440) (Methanococcus jannaschii).